The following is an 862-amino-acid chain: Mismatch repair endonuclease PMS2 (862 aa).

Asn-45, Asp-70, Glu-109, Ala-110, and Leu-111 together coordinate ATP. Basic and acidic residues-rich tracts occupy residues 391–401, 408–444, 484–495, and 528–552; these read DLEKPMVEKQD, TGEE…EPRR, PTDRAEVEKDSG, and GSQE…VDCH. Positions 391–552 are disordered; the sequence is DLEKPMVEKQ…DDSFSDVDCH (162 aa). Thr-573 carries the post-translational modification Phosphothreonine. Residues 577-580 carry the Nuclear localization signal motif; it reads KRFK. At Thr-597 the chain carries Phosphothreonine.

Belongs to the DNA mismatch repair MutL/HexB family. In terms of assembly, heterodimer of PMS2 and MLH1 (MutL alpha); this interaction is required for the stability of both partners. Forms a ternary complex with MutS alpha (MSH2-MSH6) or MutS beta (MSH2-MSH3). Part of the BRCA1-associated genome surveillance complex (BASC), which contains BRCA1, MSH2, MSH6, MLH1, ATM, BLM, PMS2 and the RAD50-MRE11-NBS1 protein complex. This association could be a dynamic process changing throughout the cell cycle and within subnuclear domains. Interacts with MTMR15/FAN1.

It localises to the nucleus. The catalysed reaction is ATP + H2O = ADP + phosphate + H(+). Its function is as follows. Component of the post-replicative DNA mismatch repair system (MMR). Heterodimerizes with MLH1 to form MutL alpha. DNA repair is initiated by MutS alpha (MSH2-MSH6) or MutS beta (MSH2-MSH3) binding to a dsDNA mismatch, then MutL alpha is recruited to the heteroduplex. Assembly of the MutL-MutS-heteroduplex ternary complex in presence of RFC and PCNA is sufficient to activate endonuclease activity of PMS2. It introduces single-strand breaks near the mismatch and thus generates new entry points for the exonuclease EXO1 to degrade the strand containing the mismatch. DNA methylation would prevent cleavage and therefore assure that only the newly mutated DNA strand is going to be corrected. MutL alpha (MLH1-PMS2) interacts physically with the clamp loader subunits of DNA polymerase III, suggesting that it may play a role to recruit the DNA polymerase III to the site of the MMR. Also implicated in DNA damage signaling, a process which induces cell cycle arrest and can lead to apoptosis in case of major DNA damages. Possesses an ATPase activity, but in the absence of gross structural changes, ATP hydrolysis may not be necessary for proficient mismatch repair. In Homo sapiens (Human), this protein is Mismatch repair endonuclease PMS2.